The sequence spans 583 residues: RuBisCO large subunit-binding protein subunit alpha, chloroplastic (583 aa).

Positions Met1–Cys14 are enriched in polar residues. The interval Met1 to Arg35 is disordered. The transit peptide at Met1–Ala45 directs the protein to the chloroplast. Positions Ser15 to Arg31 are enriched in low complexity. Ser89 bears the Phosphoserine mark.

It belongs to the chaperonin (HSP60) family. In terms of assembly, oligomer of probably six alpha and six beta subunits.

Its subcellular location is the plastid. The protein resides in the chloroplast. This protein binds RuBisCO small and large subunits and is implicated in the assembly of the enzyme oligomer. The chain is RuBisCO large subunit-binding protein subunit alpha, chloroplastic from Brassica napus (Rape).